The sequence spans 101 residues: ATP-dependent Clp protease adapter protein ClpS 2 (101 aa).

It belongs to the ClpS family. Binds to the N-terminal domain of the chaperone ClpA.

Functionally, involved in the modulation of the specificity of the ClpAP-mediated ATP-dependent protein degradation. In Rhizobium meliloti (strain 1021) (Ensifer meliloti), this protein is ATP-dependent Clp protease adapter protein ClpS 2.